Consider the following 267-residue polypeptide: MKKILLTVSLGLALSACATQGTADKDAQITQDWSVEKLYAEAQDELNSSNYTRAVKLYEILESRFPTSRHARQSQLDTAYAYYKDDEKDKALAAIERFRRLHPQHPNMDYALYLRGLVLFNEDQSFLNKLASQDWSDRDPKANREAYQAFAELVQRFPNSKYAADATARMVKLVDALGGNEMSVARYYMKRGAYIAAANRAKKIIGSYQNTRYVEESLAILELAYKKLDKPQLAADTRRVLETNFPKSPFLTHAWQPDDMPWWRYWH.

A signal peptide spans Met1 to Ala16. Cys17 carries the N-palmitoyl cysteine lipid modification. Cys17 carries the S-diacylglycerol cysteine lipid modification.

The protein belongs to the BamD family. Part of the Bam complex.

Its subcellular location is the cell outer membrane. Its function is as follows. Part of the outer membrane protein assembly complex, which is involved in assembly and insertion of beta-barrel proteins into the outer membrane. Required for efficient transformation of Neisseria gonorrhoeae by species-related DNA. This chain is Outer membrane protein assembly factor BamD, found in Neisseria gonorrhoeae.